A 235-amino-acid chain; its full sequence is Photosystem I assembly protein Ycf4 (235 aa).

Helical transmembrane passes span 21–43 (NLCW…TSSY) and 63–85 (GIVM…CTIL).

The protein belongs to the Ycf4 family.

The protein localises to the plastid. Its subcellular location is the chloroplast thylakoid membrane. Its function is as follows. Seems to be required for the assembly of the photosystem I complex. This is Photosystem I assembly protein Ycf4 from Amborella trichopoda.